The sequence spans 381 residues: MIISSASDYREAARRRVPPFMFHYADGGSYAEQTLARNVSDLENIALRQRVLKDMSELDTSIELFGEKLSMPTILAPVGACGMYARRGEVQAAQAADNKGVPFTLSTVSICPIEEVAPAIKRPMWFQLYVLKDRGFMKNALERAKAAGCSTLVFTVDMPTPGARYRDMHSGMSGPYKEIRRVLQGFTHPFWAYDVGIKGKPHTLGNVSTYMGRQIGLDDYIGWLTENFDPSISWKDLEWIREFWEGPMVIKGILDPEDAKDAVRFGADGIVVSNHGGRQLDGVLSSARALPPIADAVKGDIKIIADSGIRNGLDIVRMLALGADATMLGRAFVYALGAEGRQGVENMLDIFKKEMHVAMTLTSNRTIADIKPEALVDLSKL.

Residues 1-380 (MIISSASDYR…KPEALVDLSK (380 aa)) enclose the FMN hydroxy acid dehydrogenase domain. Tyrosine 24 is a substrate binding site. The FMN site is built by serine 106 and glutamine 127. Tyrosine 129 is a binding site for substrate. Residue threonine 155 participates in FMN binding. A substrate-binding site is contributed by arginine 164. Residue lysine 251 participates in FMN binding. Catalysis depends on histidine 275, which acts as the Proton acceptor. Arginine 278 serves as a coordination point for substrate. 306–330 (DSGIRNGLDIVRMLALGADATMLGR) lines the FMN pocket.

Belongs to the FMN-dependent alpha-hydroxy acid dehydrogenase family. It depends on FMN as a cofactor.

Its subcellular location is the cell inner membrane. It catalyses the reaction (S)-lactate + A = pyruvate + AH2. Its function is as follows. Catalyzes the conversion of L-lactate to pyruvate. Is coupled to the respiratory chain. This chain is L-lactate dehydrogenase, found in Haemophilus influenzae (strain ATCC 51907 / DSM 11121 / KW20 / Rd).